A 208-amino-acid polypeptide reads, in one-letter code: Thymidylate kinase (208 aa).

7-14 (GIDGAGKT) is an ATP binding site.

It belongs to the thymidylate kinase family.

It carries out the reaction dTMP + ATP = dTDP + ADP. Phosphorylation of dTMP to form dTDP in both de novo and salvage pathways of dTTP synthesis. The protein is Thymidylate kinase of Xylella fastidiosa (strain Temecula1 / ATCC 700964).